Here is a 174-residue protein sequence, read N- to C-terminus: Protein GrpE (174 aa).

It belongs to the GrpE family. In terms of assembly, homodimer.

Its subcellular location is the cytoplasm. In terms of biological role, participates actively in the response to hyperosmotic and heat shock by preventing the aggregation of stress-denatured proteins, in association with DnaK and GrpE. It is the nucleotide exchange factor for DnaK and may function as a thermosensor. Unfolded proteins bind initially to DnaJ; upon interaction with the DnaJ-bound protein, DnaK hydrolyzes its bound ATP, resulting in the formation of a stable complex. GrpE releases ADP from DnaK; ATP binding to DnaK triggers the release of the substrate protein, thus completing the reaction cycle. Several rounds of ATP-dependent interactions between DnaJ, DnaK and GrpE are required for fully efficient folding. The polypeptide is Protein GrpE (Methanothermobacter thermautotrophicus (strain ATCC 29096 / DSM 1053 / JCM 10044 / NBRC 100330 / Delta H) (Methanobacterium thermoautotrophicum)).